The sequence spans 576 residues: Interleukin-1 receptor type 1 (576 aa).

The signal sequence occupies residues 1-19 (MENMKVLLGLICLMVPLLS). Topologically, residues 20 to 338 (LEIDVCTEYP…QLIYPVPDFK (319 aa)) are extracellular. Disulfide bonds link C25/C107, C46/C99, and C145/C199. 3 consecutive Ig-like C2-type domains span residues 25 to 115 (CTEY…VTVT), 121 to 213 (PGLC…YPVT), and 229 to 329 (PVIL…AHVQ). N-linked (GlcNAc...) asparagine glycosylation is found at N63, N103, N174, N236, N252, N266, and N300. A disulfide bridge connects residues C251 and C315. Residues 339–359 (NYLIGGFIILTATIVCCVCIY) form a helical membrane-spanning segment. Topologically, residues 360–576 (KVFKVDIVLW…LPAATHLPLG (217 aa)) are cytoplasmic. A TIR domain is found at 386–541 (KTYDAYILYP…RFWKNLRYQM (156 aa)). E473 is an active-site residue. Position 499 is a phosphotyrosine (Y499). T556 carries the post-translational modification Phosphothreonine; by PKC.

The protein belongs to the interleukin-1 receptor family. As to quaternary structure, the interleukin-1 receptor complex is a heterodimer of IL1R1 and IL1RAP. Interacts with PIK3R1. Interacts with IL1A. Post-translationally, a soluble form (sIL1R1) is probably produced by proteolytic cleavage at the cell surface (shedding). In terms of processing, rapidly phosphorylated on Tyr-499 in response to IL-1, which creates a SH2 binding site for the PI 3-kinase regulatory subunit PIK3R1. Isoform 2 is expressed in various brain tissues.

It is found in the membrane. Its subcellular location is the cell membrane. It localises to the secreted. The enzyme catalyses NAD(+) + H2O = ADP-D-ribose + nicotinamide + H(+). Its function is as follows. Receptor for IL1A, IL1B and IL1RN. After binding to interleukin-1 associates with the coreceptor IL1RAP to form the high affinity interleukin-1 receptor complex which mediates interleukin-1-dependent activation of NF-kappa-B, MAPK and other pathways. Signaling involves the recruitment of adapter molecules such as TOLLIP, MYD88, and IRAK1 or IRAK2 via the respective TIR domains of the receptor/coreceptor subunits. Binds ligands with comparable affinity and binding of antagonist IL1RN prevents association with IL1RAP to form a signaling complex. Involved in IL1B-mediated costimulation of IFNG production from T-helper 1 (Th1) cells. Functionally, unable to mediate canonical IL-1 signaling. Cooperates with IL1RAP isoform 3 to mediate IL1B-induced neuronal activity including IL1B-potentiated NMDA-induced calcium influx mediated by Akt kinase activation. The protein is Interleukin-1 receptor type 1 (Il1r1) of Mus musculus (Mouse).